The sequence spans 543 residues: Coiled-coil domain-containing protein 9 (543 aa).

Basic and acidic residues-rich tracts occupy residues 38-47 (IEEDRKKAEL) and 59-72 (RSMEKENMAVEEKS). Residues 38–543 (IEEDRKKAEL…SGEAWPFANA (506 aa)) form a disordered region. The residue at position 94 (T94) is a Phosphothreonine. An omega-N-methylarginine mark is found at R106, R120, R126, and R128. R129, R131, and R133 each carry asymmetric dimethylarginine. S135 bears the Phosphoserine mark. Basic and acidic residues-rich tracts occupy residues 146 to 183 (TSDRKSKEWEERRRQNIEKMNEEMEKIAEYERNQREGV), 192 to 212 (FLDDPRRRGGPLEESERDRRE), and 225 to 239 (DFERVRSGLEQERQG). A coiled-coil region spans residues 147–183 (SDRKSKEWEERRRQNIEKMNEEMEKIAEYERNQREGV). Phosphoserine occurs at positions 246 and 253. Basic and acidic residues-rich tracts occupy residues 256 to 277 (GRERSEYLRWKQEREKIDQERL), 287 to 300 (WRREWDAEKTDGMF), 309 to 318 (ELSHRYDDQA), and 359 to 372 (YSDHDNRWETREEA). 2 positions are modified to phosphoserine: S374 and S384. Over residues 376–394 (APESSQSISLEETPTQASE) the composition is skewed to polar residues. A compositionally biased stretch (acidic residues) spans 405–453 (EDGEEDVGEEEEGEEEGEDEEDEEWEDVSEDVTEEEEEEEEEFEEDEEG). Residues 422–452 (EDEEDEEWEDVSEDVTEEEEEEEEEFEEDEE) are a coiled coil. Phosphoserine is present on S533.

Probable component of the exon junction complex (EJC); the association is RNA-dependent.

Probable component of the exon junction complex (EJC), a multiprotein complex that associates immediately upstream of the exon-exon junction on mRNAs and serves as a positional landmark for the intron exon structure of genes and directs post-transcriptional processes in the cytoplasm such as mRNA export, nonsense-mediated mRNA decay (NMD) or translation. This Mus musculus (Mouse) protein is Coiled-coil domain-containing protein 9 (Ccdc9).